A 274-amino-acid chain; its full sequence is Undecaprenyl-diphosphatase 1 (274 aa).

The next 7 helical transmembrane spans lie at 47–67 (QVFL…LYFN), 85–105 (VSMW…GIPF), 113–133 (FYNY…FIMI), 150–170 (ITYT…VFPG), 196–216 (FFLA…KFGL), 225–245 (ILFI…KFLM), and 253–273 (FKAF…YFLI).

The protein belongs to the UppP family.

The protein localises to the cell membrane. It catalyses the reaction di-trans,octa-cis-undecaprenyl diphosphate + H2O = di-trans,octa-cis-undecaprenyl phosphate + phosphate + H(+). Its function is as follows. Catalyzes the dephosphorylation of undecaprenyl diphosphate (UPP). Confers resistance to bacitracin. The chain is Undecaprenyl-diphosphatase 1 from Clostridium acetobutylicum (strain ATCC 824 / DSM 792 / JCM 1419 / IAM 19013 / LMG 5710 / NBRC 13948 / NRRL B-527 / VKM B-1787 / 2291 / W).